We begin with the raw amino-acid sequence, 431 residues long: MASPITPPRGMRDFLPAEKARREHALGVIRRSFSAHGFDEIETPVAEDVARLHAGLGGDNEKLAFSVLKRGLSGDDLRAAIESGDTLSLCDLGLRFDLTVPLARFFASHRAELSPVFRSLQIAPVWRAERPQKGRYRQFVQCDIDIVGEASQLAEAELITATAATLDALGLKDCTIRVNDRRILNALLQHCGFAEARWPRALISIDKLDKIGAEGVVAELSEGAADAAAALGGVLAGFEPHLADGGVELTAQAILRILPAGVDTAAIGELETLAHALGALPTGVRLRFDPKLVRGMGYYTGVIFEIAHPGSGSSVGGGGRYDGMIGRFLGTEVPACGFSIGFERVVDLIELPESAGPDSVVLVYDPAMPIGRLLAIKSDLAAAGRRVRLDRRAKNLKAVLDRAAAAGFRSFAFVDADTPAVALDLKPLTEL.

The protein belongs to the class-II aminoacyl-tRNA synthetase family. As to quaternary structure, homodimer.

It localises to the cytoplasm. The enzyme catalyses tRNA(His) + L-histidine + ATP = L-histidyl-tRNA(His) + AMP + diphosphate + H(+). The polypeptide is Histidine--tRNA ligase (hisS) (Leifsonia xyli subsp. xyli (strain CTCB07)).